Here is a 121-residue protein sequence, read N- to C-terminus: MHEVTRTYYFFLFFFLSYKRQINAAFIALFDFPLLFIYFPFLILVLFYNSNANLTAIRNTYSISSRLNPSGAFLTHEECGLVLQYIYYWLGLENKFIDLGCNSLSVVCFLADLRVYLRVPG.

A run of 2 helical transmembrane segments spans residues 26–46 and 72–92; these read FIAL…ILVL and AFLT…WLGL.

The protein resides in the membrane. This is an uncharacterized protein from Saccharomyces cerevisiae (strain ATCC 204508 / S288c) (Baker's yeast).